The chain runs to 126 residues: Fluoride-specific ion channel FluC (126 aa).

Helical transmembrane passes span P4 to L24, I33 to A53, F67 to V87, and M97 to L117. G74 and T77 together coordinate Na(+).

Belongs to the fluoride channel Fluc/FEX (TC 1.A.43) family.

Its subcellular location is the cell inner membrane. It catalyses the reaction fluoride(in) = fluoride(out). Its activity is regulated as follows. Na(+) is not transported, but it plays an essential structural role and its presence is essential for fluoride channel function. Fluoride-specific ion channel. Important for reducing fluoride concentration in the cell, thus reducing its toxicity. This Acinetobacter baumannii (strain ATCC 17978 / DSM 105126 / CIP 53.77 / LMG 1025 / NCDC KC755 / 5377) protein is Fluoride-specific ion channel FluC.